We begin with the raw amino-acid sequence, 839 residues long: Conserved oligomeric Golgi complex subunit 6 (839 aa).

The tract at residues 14–38 (DTATPELPEPEPRLNLTSDAQSQPT) is disordered.

It belongs to the COG6 family. In terms of assembly, component of the conserved oligomeric Golgi (COG or Sec34/Sec35) complex which consists of eight different proteins COG1-COG8.

It localises to the golgi apparatus membrane. Acts as a component of the peripheral membrane COG complex that is involved in intra-Golgi protein trafficking. COG is located at the cis-Golgi, and regulates tethering of retrograde intra-Golgi vesicles and possibly a number of other membrane trafficking events. In Saccharomyces cerevisiae (strain ATCC 204508 / S288c) (Baker's yeast), this protein is Conserved oligomeric Golgi complex subunit 6 (COG6).